The chain runs to 383 residues: Forkhead box protein I3-B (383 aa).

Positions 1-12 are enriched in polar residues; that stretch reads MTSYESQGQSPT. Disordered stretches follow at residues 1-55, 215-277, and 317-348; these read MTSY…YELG, DNGN…PCLS, and TTGFSTFTPSTTVSDWASPLPPPPPMSSSPSH. A compositionally biased stretch (low complexity) spans 25-35; the sequence is PPELSLYSDSY. Positions 130–224 form a DNA-binding region, fork-head; that stretch reads RPPYSYSALI…DNGNFRRKRK (95 aa). Residues 220 to 226 carry the Nuclear localization signal motif; sequence RRKRKRK. The segment covering 234–249 has biased composition (low complexity); that stretch reads SSSGGNESGDSNGRGS. Residues 250–277 are compositionally biased toward polar residues; that stretch reads PKSQSIDISTSPEKGPSPASTGPSPCLS. Residues 317-330 show a composition bias toward low complexity; that stretch reads TTGFSTFTPSTTVS.

Expressed in ionocyte precursors.

The protein localises to the nucleus. Its function is as follows. Transcription factor required for epithelial cell differentiation. Involved in specification of skin ionocytes from epidermal precursors. The chain is Forkhead box protein I3-B from Danio rerio (Zebrafish).